Reading from the N-terminus, the 1765-residue chain is MEERYYPVIFPDERNFRPFTFDSLAAIEKRITIQKEKKKSKDKAATEPQPRPQLDLKASRKLPKLYGDVPPDLIAKPLEDLDPFYKDHKTFMVLNKKRTIYRFSAKRALFILGPFNPIRSFMIRISVHSVFSMFIICTVIINCMFMANNSSVDSRPSSNIPEYVFIGIYVLEAVIKILARGFIVDEFSYLRDPWNWLDFIVIGTAIAPCFLGNKVNNLSTLRTFRVLRALKAISVISGLKVIVGALLRSVKKLVDVMVLTLFCLSIFALVGQQLFMGILSQKCIKDDCGPNAFSNKDCFVKENDSEDFIMCGNWLGRRSCPDGSTCNKTTFNPDYNYTNFDSFGWSFLAMFRVMTQDSWEKLYRQILRTSGIYFVFFFVVVIFLGSFYLLNLTLAVVTMAYEEQNRNVAAETEAKEKMFQEAQQLLREEKEALVAMGIDRTSLNSLQASSFSPKKRKFFGSKTRKSFFMRGSKTARASASDSEDDASKNPQLLEQTKRLSQNLPVELFDEHVDPLHRQRALSAVSILTITMQEQEKSQEPCFPCGKNLASKYLVWECSPPWLCIKKVLQTIMTDPFTELAITICIIVNTVFLAMEHHNMDNSLKDILKIGNWVFTGIFIAEMCLKIIALDPYHYFRHGWNIFDSIVALVSLADVLFHKLSKNLSFLASLRVLRVFKLAKSWPTLNTLIKIIGHSVGALGNLTVVLTIVVFIFSVVGMRLFGAKFNKTCSTSPESLRRWHMGDFYHSFLVVFRILCGEWIENMWECMQEMEGSPLCVIVFVLIMVVGKLVVLNLFIALLLNSFSNEEKDGNPEGETRKTKVQLALDRFSRAFYFMARALQNFCCKRCRRQNSPKPNEATESFAGESRDTATLDTRSWKEYDSEMTLYTGQAGAPLAPLAKEEDDMECCGECDASPTSQPSEEAQACDLPLKTKRLPSPDDHGVEMEVFSEEDPNLTIQSARKKSDAASMLSECSTIDLNDIFRNLQKTVSPQKQPDRCFPKGLSCIFLCCKTIKKKSPWVLWWNLRKTCYQIVKHSWFESFIIFVILLSSGALIFEDVNLPSRPQVEKLLKCTDNIFTFIFLLEMILKWVAFGFRKYFTSAWCWLDFLIVVVSGLSLTNLPNLKSFRNLRALRPLRALSQFEGMKVVVNALMSAIPAILNVLLVCLIFWLIFCILGVNFFSGKFGRCINGTDINKYFNASNVPNQSQCLVSNYTWKVPNVNFDNVGNAYLALLQVATYKGWLDIMNAAVDSRGKDEQPAFEANLYAYLYFVVFIIFGSFFTLNLFIGVIIDNFNQQQKKLGGQDIFMTEEQKKYYNAMKKLGTKKPQKPIPRPLNKCQAFVFDLVTSQVFDVIILGLIVTNMIIMMAESEGQPNEVKKIFDILNIVFVVIFTVECLIKVFALRQHYFTNGWNLFDCVVVVLSIISTLVSGLENSNVFPPTLFRIVRLARIGRILRLVRAARGIRTLLFALMMSLPSLFNIGLLLFLVMFIYAIFGMNWFSKVKRGSGIDDIFNFDTFSGSMLCLFQITTSAGWDALLNPMLESKASCNSSSQESCQQPQIAIVYFVSYIIISFLIVVNMYIAVILENFNTATEESEDPLGEDDFEIFYEIWEKFDPEATQFIQYSSLSDFADALPEPLRVAKPNRFQFLMMDLPMVMGDRLHCMDVLFAFTTRVLGNSSGLDTMKAMMEEKFMEANPFKKLYEPIVTTTKRKEEEECAAVIQRAYRRHMEKMIKLKLKGRSSSSLQVFCNGDLSSLDVPKIKVHCD.

The Cytoplasmic portion of the chain corresponds to 1 to 126; it reads MEERYYPVIF…PIRSFMIRIS (126 aa). The stretch at 115–406 is one I repeat; it reads FNPIRSFMIR…VTMAYEEQNR (292 aa). The helical transmembrane segment at 127 to 148 threads the bilayer; the sequence is VHSVFSMFIICTVIINCMFMAN. The N-linked (GlcNAc...) asparagine glycan is linked to Asn-149. Residues 149 to 159 lie on the Extracellular side of the membrane; that stretch reads NSSVDSRPSSN. Residues 160-179 traverse the membrane as a helical segment; that stretch reads IPEYVFIGIYVLEAVIKILA. At 180–191 the chain is on the cytoplasmic side; it reads RGFIVDEFSYLR. A helical transmembrane segment spans residues 192 to 211; sequence DPWNWLDFIVIGTAIAPCFL. The Extracellular segment spans residues 212–219; the sequence is GNKVNNLS. Residue Asn-217 is glycosylated (N-linked (GlcNAc...) asparagine). A helical; Voltage-sensor membrane pass occupies residues 220-239; it reads TLRTFRVLRALKAISVISGL. The Cytoplasmic portion of the chain corresponds to 240 to 255; it reads KVIVGALLRSVKKLVD. The helical transmembrane segment at 256–269 threads the bilayer; sequence VMVLTLFCLSIFAL. At 270-342 the chain is on the extracellular side; the sequence is VGQQLFMGIL…PDYNYTNFDS (73 aa). Cysteines 283 and 320 form a disulfide. N-linked (GlcNAc...) asparagine glycosylation is found at Asn-303, Asn-327, and Asn-336. The pore-forming intramembrane region spans 343-367; sequence FGWSFLAMFRVMTQDSWEKLYRQIL. The Extracellular segment spans residues 368 to 374; it reads RTSGIYF. The helical transmembrane segment at 375 to 400 threads the bilayer; the sequence is VFFFVVVIFLGSFYLLNLTLAVVTMA. The Cytoplasmic segment spans residues 401-570; that stretch reads YEEQNRNVAA…WLCIKKVLQT (170 aa). The interval 470-490 is disordered; that stretch reads RGSKTARASASDSEDDASKNP. One copy of the II repeat lies at 557–821; it reads CSPPWLCIKK…EGETRKTKVQ (265 aa). The helical transmembrane segment at 571–594 threads the bilayer; the sequence is IMTDPFTELAITICIIVNTVFLAM. The Extracellular segment spans residues 595–605; it reads EHHNMDNSLKD. The chain crosses the membrane as a helical span at residues 606–629; sequence ILKIGNWVFTGIFIAEMCLKIIAL. Residues 630–637 are Cytoplasmic-facing; it reads DPYHYFRH. Residues 638–659 traverse the membrane as a helical segment; that stretch reads GWNIFDSIVALVSLADVLFHKL. The Extracellular portion of the chain corresponds to 660–664; that stretch reads SKNLS. Residue Asn-662 is glycosylated (N-linked (GlcNAc...) asparagine). Residues 665 to 684 form a helical; Voltage-sensor membrane-spanning segment; it reads FLASLRVLRVFKLAKSWPTL. At 685–699 the chain is on the cytoplasmic side; sequence NTLIKIIGHSVGALG. The helical transmembrane segment at 700 to 722 threads the bilayer; it reads NLTVVLTIVVFIFSVVGMRLFGA. At 723–742 the chain is on the extracellular side; that stretch reads KFNKTCSTSPESLRRWHMGD. Asn-725 carries an N-linked (GlcNAc...) asparagine glycan. The segment at residues 743–763 is an intramembrane region (pore-forming); it reads FYHSFLVVFRILCGEWIENMW. Residues 764 to 773 are Extracellular-facing; it reads ECMQEMEGSP. Cys-765 and Cys-775 are oxidised to a cystine. The chain crosses the membrane as a helical span at residues 774–799; it reads LCVIVFVLIMVVGKLVVLNLFIALLL. Residues 800–1030 lie on the Cytoplasmic side of the membrane; it reads NSFSNEEKDG…WWNLRKTCYQ (231 aa). Positions 850–869 are disordered; sequence NSPKPNEATESFAGESRDTA. Residues 1023 to 1320 form an III repeat; that stretch reads NLRKTCYQIV…KKYYNAMKKL (298 aa). The helical transmembrane segment at 1031–1053 threads the bilayer; sequence IVKHSWFESFIIFVILLSSGALI. Topologically, residues 1054–1067 are extracellular; that stretch reads FEDVNLPSRPQVEK. A helical transmembrane segment spans residues 1068-1093; it reads LLKCTDNIFTFIFLLEMILKWVAFGF. The Cytoplasmic segment spans residues 1094-1099; that stretch reads RKYFTS. A helical membrane pass occupies residues 1100 to 1117; it reads AWCWLDFLIVVVSGLSLT. A topological domain (extracellular) is located at residue Asn-1118. A helical; Voltage-sensor membrane pass occupies residues 1119–1140; sequence LPNLKSFRNLRALRPLRALSQF. At 1141 to 1159 the chain is on the cytoplasmic side; the sequence is EGMKVVVNALMSAIPAILN. A helical membrane pass occupies residues 1160-1181; it reads VLLVCLIFWLIFCILGVNFFSG. Residues 1182–1224 lie on the Extracellular side of the membrane; the sequence is KFGRCINGTDINKYFNASNVPNQSQCLVSNYTWKVPNVNFDNV. Residues Asn-1188, Asn-1197, Asn-1203, and Asn-1211 are each glycosylated (N-linked (GlcNAc...) asparagine). The pore-forming intramembrane region spans 1225 to 1246; it reads GNAYLALLQVATYKGWLDIMNA. The Extracellular portion of the chain corresponds to 1247-1262; the sequence is AVDSRGKDEQPAFEAN. The helical transmembrane segment at 1263-1289 threads the bilayer; it reads LYAYLYFVVFIIFGSFFTLNLFIGVII. Residues 1290 to 1342 lie on the Cytoplasmic side of the membrane; the sequence is DNFNQQQKKLGGQDIFMTEEQKKYYNAMKKLGTKKPQKPIPRPLNKCQAFVFD. One copy of the IV repeat lies at 1329–1619; it reads IPRPLNKCQA…WEKFDPEATQ (291 aa). The helical transmembrane segment at 1343–1366 threads the bilayer; the sequence is LVTSQVFDVIILGLIVTNMIIMMA. Topologically, residues 1367-1377 are extracellular; the sequence is ESEGQPNEVKK. A helical transmembrane segment spans residues 1378–1401; that stretch reads IFDILNIVFVVIFTVECLIKVFAL. The Cytoplasmic segment spans residues 1402 to 1407; the sequence is RQHYFT. A helical transmembrane segment spans residues 1408-1431; the sequence is NGWNLFDCVVVVLSIISTLVSGLE. Residues 1432 to 1440 lie on the Extracellular side of the membrane; the sequence is NSNVFPPTL. Residues 1441 to 1463 traverse the membrane as a helical; Voltage-sensor segment; sequence FRIVRLARIGRILRLVRAARGIR. The Cytoplasmic segment spans residues 1464–1478; it reads TLLFALMMSLPSLFN. The chain crosses the membrane as a helical span at residues 1479-1501; sequence IGLLLFLVMFIYAIFGMNWFSKV. Residues 1502-1515 are Extracellular-facing; sequence KRGSGIDDIFNFDT. The pore-forming intramembrane region spans 1516–1538; sequence FSGSMLCLFQITTSAGWDALLNP. Residues 1539–1559 are Extracellular-facing; sequence MLESKASCNSSSQESCQQPQI. A helical membrane pass occupies residues 1560 to 1584; the sequence is AIVYFVSYIIISFLIVVNMYIAVIL. Residues 1585–1765 are Cytoplasmic-facing; sequence ENFNTATEES…DVPKIKVHCD (181 aa).

The protein belongs to the sodium channel (TC 1.A.1.10) family. Nav1.9/SCN11A subfamily. As to quaternary structure, the voltage-resistant sodium channel consists of an ion conducting pore forming alpha-subunit regulated by one or more auxiliary subunits SCN1B, SCN2B and SCN3B. Expressed in the dorsal root ganglia (C-fiber neurons), spinal cord, trigeminal ganglia, testis, ovary, uterus and small intestine.

It is found in the cell membrane. It carries out the reaction Na(+)(in) = Na(+)(out). Functionally, sodium channel mediating the voltage-dependent sodium ion permeability of excitable membranes. Assuming opened or closed conformations in response to the voltage difference across the membrane, the protein forms a sodium-selective channel through which sodium ions may pass in accordance with their electrochemical gradient. Involved in membrane depolarization during action potential in nociceptors which function as key relay stations for the electrical transmission of pain signals from the periphery to the central nervous system. Also involved in rapid BDNF-evoked neuronal depolarization. This is Sodium channel protein type 11 subunit alpha from Mus musculus (Mouse).